Consider the following 227-residue polypeptide: 2,3-bisphosphoglycerate-dependent phosphoglycerate mutase (227 aa).

Residues Arg-7 to Asn-14, Thr-20 to Gly-21, Arg-59, Glu-86 to Tyr-89, Lys-97, Arg-113 to Arg-114, and Gly-182 to Asn-183 each bind substrate. His-8 (tele-phosphohistidine intermediate) is an active-site residue. Glu-86 acts as the Proton donor/acceptor in catalysis.

It belongs to the phosphoglycerate mutase family. BPG-dependent PGAM subfamily. In terms of assembly, homodimer.

It catalyses the reaction (2R)-2-phosphoglycerate = (2R)-3-phosphoglycerate. It functions in the pathway carbohydrate degradation; glycolysis; pyruvate from D-glyceraldehyde 3-phosphate: step 3/5. Its function is as follows. Catalyzes the interconversion of 2-phosphoglycerate and 3-phosphoglycerate. The protein is 2,3-bisphosphoglycerate-dependent phosphoglycerate mutase of Glaesserella parasuis serovar 5 (strain SH0165) (Haemophilus parasuis).